A 484-amino-acid chain; its full sequence is Maintenance of mitochondrial morphology protein 1 (484 aa).

Residues 1 to 22 (MSFQQSETVPVPAQSSLSFTQG) lie on the Lumenal side of the membrane. Residues 23 to 43 (FLLGQLSVVLLIGAFIKFFIF) form a helical membrane-spanning segment. Topologically, residues 44–484 (GEAPPPPSRG…PGSLSGAAAR (441 aa)) are cytoplasmic. 3 disordered regions span residues 50 to 98 (PSRG…SSST), 272 to 319 (STPP…TGSP), and 388 to 484 (RTGV…AAAR). Over residues 54–64 (LSHRASTHRRS) the composition is skewed to basic residues. Polar residues-rich tracts occupy residues 65–78 (NSIY…ANNR) and 85–98 (SNSN…SSST). An SMP-LTD domain is found at 130–380 (QPESLDWFNV…EPRVQVVGLP (251 aa)). Residues 272-286 (STPPLHTPSPSPSPP) are compositionally biased toward pro residues. Residues 399-408 (TGSNAASRSA) are compositionally biased toward polar residues. Residues 413–427 (LGDHHLGDREPEGLR) are compositionally biased toward basic and acidic residues. Polar residues-rich tracts occupy residues 437 to 449 (QFDS…SYNV) and 466 to 476 (GALSEQFQMPG).

Belongs to the MMM1 family. As to quaternary structure, homodimer. Component of the ER-mitochondria encounter structure (ERMES) or MDM complex, composed of mmm1, mdm10, mdm12 and mdm34. A mmm1 homodimer associates with one molecule of mdm12 on each side in a pairwise head-to-tail manner, and the SMP-LTD domains of mmm1 and mdm12 generate a continuous hydrophobic tunnel for phospholipid trafficking.

Its subcellular location is the endoplasmic reticulum membrane. In terms of biological role, component of the ERMES/MDM complex, which serves as a molecular tether to connect the endoplasmic reticulum (ER) and mitochondria. Components of this complex are involved in the control of mitochondrial shape and protein biogenesis, and function in nonvesicular lipid trafficking between the ER and mitochondria. The mdm12-mmm1 subcomplex functions in the major beta-barrel assembly pathway that is responsible for biogenesis of all outer membrane beta-barrel proteins, and acts in a late step after the SAM complex. The mdm10-mdm12-mmm1 subcomplex further acts in the TOM40-specific pathway after the action of the mdm12-mmm1 complex. Essential for establishing and maintaining the structure of mitochondria and maintenance of mtDNA nucleoids. This is Maintenance of mitochondrial morphology protein 1 from Aspergillus niger (strain ATCC MYA-4892 / CBS 513.88 / FGSC A1513).